Here is a 508-residue protein sequence, read N- to C-terminus: Probable protein kinase UbiB (508 aa).

The Protein kinase domain occupies 118 to 494 (DFDLKPVASA…QKRQNFLLLL (377 aa)). ATP-binding positions include 124–132 (VASASVAQV) and K151. Residue D286 is the Proton acceptor of the active site. A helical transmembrane segment spans residues 488–508 (QNFLLLLIAILLAALLAKSLL).

This sequence belongs to the ABC1 family. UbiB subfamily.

The protein resides in the cell inner membrane. Its pathway is cofactor biosynthesis; ubiquinone biosynthesis [regulation]. Functionally, is probably a protein kinase regulator of UbiI activity which is involved in aerobic coenzyme Q (ubiquinone) biosynthesis. The chain is Probable protein kinase UbiB from Chromobacterium violaceum (strain ATCC 12472 / DSM 30191 / JCM 1249 / CCUG 213 / NBRC 12614 / NCIMB 9131 / NCTC 9757 / MK).